The following is a 301-amino-acid chain: Probable alpha-L-glutamate ligase 1 (301 aa).

Positions 104-287 constitute an ATP-grasp domain; sequence LQLLSRKGIG…VTEPIVEYIE (184 aa). Residues Lys-141, 178–179, Asp-187, and 211–213 contribute to the ATP site; these read EY and RSN. Mg(2+) is bound by residues Asp-248, Glu-260, and Asn-262. Positions 248, 260, and 262 each coordinate Mn(2+).

It belongs to the RimK family. Mg(2+) serves as cofactor. Requires Mn(2+) as cofactor.

This Shewanella sp. (strain W3-18-1) protein is Probable alpha-L-glutamate ligase 1.